The chain runs to 70 residues: Sporulation protein YhaL (70 aa).

A helical transmembrane segment spans residues 3-23 (FFPWWVYLCIVGIIFSAYKLV). A disordered region spans residues 48–70 (MEKERERRSSQQHEEENQNHSIA).

It is found in the cell membrane. Required for efficient sporulation. This Bacillus subtilis (strain 168) protein is Sporulation protein YhaL (yhaL).